The following is a 156-amino-acid chain: Transcription elongation factor GreA (156 aa).

A coiled-coil region spans residues 44–67; it reads ENAEYEAAKEKQAMIEGRIQDLCQ.

Belongs to the GreA/GreB family.

In terms of biological role, necessary for efficient RNA polymerase transcription elongation past template-encoded arresting sites. The arresting sites in DNA have the property of trapping a certain fraction of elongating RNA polymerases that pass through, resulting in locked ternary complexes. Cleavage of the nascent transcript by cleavage factors such as GreA or GreB allows the resumption of elongation from the new 3'terminus. GreA releases sequences of 2 to 3 nucleotides. The protein is Transcription elongation factor GreA of Syntrophobacter fumaroxidans (strain DSM 10017 / MPOB).